Consider the following 272-residue polypeptide: Acyl-[acyl-carrier-protein]--UDP-N-acetylglucosamine O-acyltransferase (272 aa).

Belongs to the transferase hexapeptide repeat family. LpxA subfamily. As to quaternary structure, homotrimer.

It is found in the cytoplasm. The catalysed reaction is a (3R)-hydroxyacyl-[ACP] + UDP-N-acetyl-alpha-D-glucosamine = a UDP-3-O-[(3R)-3-hydroxyacyl]-N-acetyl-alpha-D-glucosamine + holo-[ACP]. The protein operates within glycolipid biosynthesis; lipid IV(A) biosynthesis; lipid IV(A) from (3R)-3-hydroxytetradecanoyl-[acyl-carrier-protein] and UDP-N-acetyl-alpha-D-glucosamine: step 1/6. In terms of biological role, involved in the biosynthesis of lipid A, a phosphorylated glycolipid that anchors the lipopolysaccharide to the outer membrane of the cell. This Rhizobium leguminosarum bv. trifolii (strain WSM2304) protein is Acyl-[acyl-carrier-protein]--UDP-N-acetylglucosamine O-acyltransferase.